Here is a 538-residue protein sequence, read N- to C-terminus: Zinc finger protein with KRAB and SCAN domains 3 (538 aa).

Phosphoserine is present on S42. Positions 46 to 128 (RERFRGFRYP…VLLEYLERQL (83 aa)) constitute an SCAN box domain. K171 participates in a covalent cross-link: Glycyl lysine isopeptide (Lys-Gly) (interchain with G-Cter in SUMO2). T207 is modified (phosphothreonine). The KRAB domain maps to 214–274 (LKVEDVALTL…PAEELPEKEH (61 aa)). Positions 226–236 (EWTQQDSSQGN) are enriched in polar residues. The interval 226–274 (EWTQQDSSQGNLCRDEKQENHGSLVSLGDEKQTKSRDLPPAEELPEKEH) is disordered. Residues 253–274 (GDEKQTKSRDLPPAEELPEKEH) show a composition bias toward basic and acidic residues. 5 C2H2-type zinc fingers span residues 314–336 (HICHECGKSFAQSSGLSKHRRIH), 342–364 (YECEECGKAFIGSSALVIHQRVH), 370–392 (YECEECGKAFSHSSDLIKHQRTH), 398–420 (YECDDCGKTFSQSCSLLEHHRIH), and 426–448 (YQCSMCGKAFRRSSHLLRHQRIH). T449 is subject to Phosphothreonine. 2 consecutive C2H2-type zinc fingers follow at residues 480–502 (YKCNECERSFTQNTGLIEHQKIH) and 508–530 (YQCNACGKGFTRISYLVQHQRSH).

This sequence belongs to the krueppel C2H2-type zinc-finger protein family.

It localises to the nucleus. Its subcellular location is the cytoplasm. In terms of biological role, transcriptional factor that binds to the consensus sequence 5'-[GT][AG][AGT]GGGG-3' and acts as a repressor of autophagy. Specifically represses expression of genes involved in autophagy and lysosome biogenesis/function such as MAP1LC3B, ULK1 or WIPI2. Associates with chromatin at the ITGB4 and VEGF promoters. Also acts as a transcription activator and promotes cancer cell progression and/or migration in various tumors and myelomas. This is Zinc finger protein with KRAB and SCAN domains 3 (ZKSCAN3) from Homo sapiens (Human).